A 465-amino-acid chain; its full sequence is Asparagine--tRNA ligase (465 aa).

The protein belongs to the class-II aminoacyl-tRNA synthetase family. Homodimer.

It localises to the cytoplasm. It carries out the reaction tRNA(Asn) + L-asparagine + ATP = L-asparaginyl-tRNA(Asn) + AMP + diphosphate + H(+). The sequence is that of Asparagine--tRNA ligase from Pseudoalteromonas translucida (strain TAC 125).